The primary structure comprises 327 residues: Sphingomyelinase D (327 aa).

The signal sequence occupies residues 1-23; that stretch reads MQPLTRTICALFCLLLTLPLTFG. His-52 is a catalytic residue. Residues Glu-72, Asp-74, and Asp-117 each coordinate Mg(2+). The SMD-tail signature appears at 320 to 327; the sequence is VTGADKLW.

It belongs to the sphingomyelinase D/phospholipase D family. Requires Mg(2+) as cofactor.

The protein localises to the secreted. The enzyme catalyses a sphingomyelin + H2O = an N-acylsphing-4-enine 1-phosphate + choline + H(+). Its function is as follows. Catalyzes the hydrolysis of sphingomyelin. Sphingomyelinases D are produced by some spider in their venoms, but also by arthropods such as ticks, or pathogenic bacteria and fungi. They might play a role in pathogenicity through different mechanisms, such as membrane destabilization and host cell penetration, but also pulmonary inflammation and cutaneous lesions. The protein is Sphingomyelinase D of Paracoccidioides brasiliensis (strain Pb03).